The sequence spans 246 residues: uncharacterized protein (246 aa).

A helical transmembrane segment spans residues 7-29 (GRGALASTGGCVVLAVAALMFVF).

Its subcellular location is the membrane. This is an uncharacterized protein from Treponema pallidum (strain Nichols).